Consider the following 589-residue polypeptide: MLRLLALFLHCLPLVSGDYDICKSWVTTDEGPTWEFYACQPKVMRLKDYVKVKVEPSGITCGDPPERFCSHENPYLCSNECDASNPDLAHPPRLMFDREDEGLATYWQSVTWSRYPSPLEANITLSWNKSVELTDDVVVTFEYGRPTVMVLEKSLDNGRTWQPYQFYAEDCMEAFGMSARRARDMSPSSAHRVLCTEEYSRWAGSKKEKHVRFEVRDRFAIFAGPDLRNMDNLYTRMESAKGLKEFFTFTDLRMRLLRPALGGTYVQRENLYKYFYAISNIEVIGRCKCNLHANLCTVREGSLQCECEHNTTGPDCGRCKKNFRTRAWRAGSYLPLPHGSPNACAAAGSAFGSQTKPPTMAPLGDSSFWPQVSSSAEAVAISVAVPSQAKDSTLFELKPRSPQVIPIEEFQDCECYGHSNRCSYIDFLNVVTCVSCKHNTRGQHCQHCRLGYYRNGSAELDDENVCIECNCNQIGSVHDRCNETGFCECREGAVGPKCDDCLPTHYWRQGCYPNVCDDDQLLCQNGGTCQQNQRCACPPGYTGIRCEQPRCDLADDAGPDCDRAPGIVPRPDTLLGCLLLLGLAARLAC.

Positions 1 to 17 are cleaved as a signal peptide; it reads MLRLLALFLHCLPLVSG. 3 disulfides stabilise this stretch: cysteine 22–cysteine 39, cysteine 61–cysteine 81, and cysteine 69–cysteine 77. One can recognise a Laminin N-terminal domain in the interval 35–286; it reads EFYACQPKVM…AISNIEVIGR (252 aa). Positions 69 to 88 are NGL discriminant loop I; sequence CSHENPYLCSNECDASNPDL. Residues asparagine 122 and asparagine 128 are each glycosylated (N-linked (GlcNAc...) asparagine). Cysteine 171 and cysteine 195 form a disulfide bridge. Positions 201–203 are NGL discriminant loop II; the sequence is RWA. The interval 264–267 is NGL discriminant loop III; the sequence is TYVQ. 15 disulfide bridges follow: cysteine 287-cysteine 296, cysteine 289-cysteine 305, cysteine 307-cysteine 316, cysteine 319-cysteine 344, cysteine 413-cysteine 422, cysteine 415-cysteine 433, cysteine 436-cysteine 445, cysteine 448-cysteine 466, cysteine 469-cysteine 481, cysteine 471-cysteine 487, cysteine 489-cysteine 498, cysteine 501-cysteine 511, cysteine 516-cysteine 529, cysteine 523-cysteine 535, and cysteine 537-cysteine 546. Laminin EGF-like domains lie at 287 to 346, 413 to 468, and 469 to 513; these read CKCN…ACAA, CECY…VCIE, and CNCN…GCYP. An N-linked (GlcNAc...) asparagine glycan is attached at asparagine 310. Residue asparagine 455 is glycosylated (N-linked (GlcNAc...) asparagine). The N-linked (GlcNAc...) asparagine glycan is linked to asparagine 482. Glycine 566 carries GPI-anchor amidated glycine lipidation. A propeptide spans 567-589 (removed in mature form); sequence IVPRPDTLLGCLLLLGLAARLAC.

As to quaternary structure, interacts with LRRC4. In terms of processing, N-glycosylated. As to expression, expression is restricted primarily to neurons of the CNS, particularly in the cerebral cortex, habenular nucleus and superior colliculus. Low levels in lung, kidney, heart and spleen.

It is found in the cell membrane. Involved in controlling patterning and neuronal circuit formation at the laminar, cellular, subcellular and synaptic levels. Promotes neurite outgrowth of both axons and dendrites. This chain is Netrin-G2 (Ntng2), found in Mus musculus (Mouse).